The chain runs to 930 residues: Translation initiation factor IF-2 (930 aa).

A compositionally biased stretch (low complexity) spans 50–67; that stretch reads FKPAAAPKVEAKPAAPKV. Disordered regions lie at residues 50–217 and 260–346; these read FKPA…SSEE and EVVP…HELP. Composition is skewed to basic and acidic residues over residues 68 to 90 and 110 to 125; these read SAEKKAEKSEPAKPAVAKEEAKP and FKAEREARAKEQAERR. Over residues 129-141 the composition is skewed to low complexity; the sequence is KGNNRDQQQNGNR. Composition is skewed to basic and acidic residues over residues 157-167 and 262-295; these read RDNRRFNDQAK and VPEKKEPAVDTRRKKQARPDKNRDDYDHEEDGPR. The span at 309–318 shows a compositional bias: low complexity; it reads NQKNSNWNNN. Residues 337-346 show a composition bias toward basic and acidic residues; it reads VTERKFHELP. The 168-residue stretch at 432 to 599 folds into the tr-type G domain; it reads ERPPVVTIMG…TVLLVAEIQE (168 aa). The G1 stretch occupies residues 441 to 448; it reads GHVDHGKT. GTP is bound at residue 441–448; sequence GHVDHGKT. The G2 stretch occupies residues 466-470; that stretch reads GITQH. Residues 487–490 are G3; the sequence is DTPG. Residues 487 to 491 and 541 to 544 each bind GTP; these read DTPGH and NKID. A G4 region spans residues 541 to 544; that stretch reads NKID. A G5 region spans residues 577–579; that stretch reads SAK.

The protein belongs to the TRAFAC class translation factor GTPase superfamily. Classic translation factor GTPase family. IF-2 subfamily.

It is found in the cytoplasm. One of the essential components for the initiation of protein synthesis. Protects formylmethionyl-tRNA from spontaneous hydrolysis and promotes its binding to the 30S ribosomal subunits. Also involved in the hydrolysis of GTP during the formation of the 70S ribosomal complex. The polypeptide is Translation initiation factor IF-2 (Streptococcus pneumoniae (strain Taiwan19F-14)).